The sequence spans 280 residues: Mediator of RNA polymerase II transcription subunit 2 (280 aa).

Residues 212-247 form a disordered region; sequence GLQNTSGGNEKKNDPQINFNDTNAPPSAVNVPENGN. The span at 226-236 shows a compositional bias: polar residues; it reads PQINFNDTNAP.

Belongs to the Mediator complex subunit 2 family. In terms of assembly, component of the Mediator complex.

It localises to the nucleus. Its function is as follows. Component of the Mediator complex, a coactivator involved in the regulated transcription of nearly all RNA polymerase II-dependent genes. Mediator functions as a bridge to convey information from gene-specific regulatory proteins to the basal RNA polymerase II transcription machinery. Mediator is recruited to promoters by direct interactions with regulatory proteins and serves as a scaffold for the assembly of a functional preinitiation complex with RNA polymerase II and the general transcription factors. The polypeptide is Mediator of RNA polymerase II transcription subunit 2 (MED2) (Kluyveromyces lactis (strain ATCC 8585 / CBS 2359 / DSM 70799 / NBRC 1267 / NRRL Y-1140 / WM37) (Yeast)).